We begin with the raw amino-acid sequence, 231 residues long: Lipoprotein-releasing system ATP-binding protein LolD (231 aa).

Positions 11–231 (LQAEHLGKVY…HMENGRLQPD (221 aa)) constitute an ABC transporter domain. 47-54 (GASGSGKS) contacts ATP.

It belongs to the ABC transporter superfamily. Lipoprotein translocase (TC 3.A.1.125) family. In terms of assembly, the complex is composed of two ATP-binding proteins (LolD) and two transmembrane proteins (LolC and LolE).

Its subcellular location is the cell inner membrane. Its function is as follows. Part of the ABC transporter complex LolCDE involved in the translocation of mature outer membrane-directed lipoproteins, from the inner membrane to the periplasmic chaperone, LolA. Responsible for the formation of the LolA-lipoprotein complex in an ATP-dependent manner. In Bordetella bronchiseptica (strain ATCC BAA-588 / NCTC 13252 / RB50) (Alcaligenes bronchisepticus), this protein is Lipoprotein-releasing system ATP-binding protein LolD.